Consider the following 24-residue polypeptide: Ascaphin-4 (24 aa).

In terms of tissue distribution, expressed by the skin glands.

It is found in the secreted. In terms of biological role, antimicrobial peptide that shows higher potency against Gram-negative bacteria than against Gram-positive bacteria. Has a very week hemolytic activity. This is Ascaphin-4 from Ascaphus truei (Coastal tailed frog).